A 364-amino-acid polypeptide reads, in one-letter code: MKGLILVGGFGTRLRPLTLTLPKPLVEFCNKPMIVHQIEALVAAGVTDIVLAVNYRPEIMEKFLAEYEEKYNINIEFSVESEPLDTAGPLKLAERILGKDDSPFFVLNSDVICDYPFKELLEFHKAHGDEGTIVVTKVEEPSKYGVVVHKPNHPSRIDRFVEKPVEFVGNRINAGMYIFNPSVLKRIELRPTSIEKETFPAMVADNQLHSFDLEGFWMDVGQPKDFLSGTCLYLSSLTKKGSKELTPPTEPYVHGGNVMIHPSAKIGKNCRIGPNVTIGPDVVVGDGVRLQRCVLLKGSKVKDHAWVKSTIVGWNSTVGRWARLENVTVLGDDVTIGDEIYVNGGSVLPHKSIKANVDVPAIIM.

It belongs to the transferase hexapeptide repeat family.

The protein localises to the cytoplasm. The enzyme catalyses alpha-D-mannose 1-phosphate + GTP + H(+) = GDP-alpha-D-mannose + diphosphate. It participates in nucleotide-sugar biosynthesis; GDP-alpha-D-mannose biosynthesis; GDP-alpha-D-mannose from alpha-D-mannose 1-phosphate (GTP route): step 1/1. Its function is as follows. Involved in cell wall synthesis where it is required for glycosylation. Involved in cell cycle progression through cell-size checkpoint. The sequence is that of Mannose-1-phosphate guanyltransferase (mpg1) from Hypocrea jecorina (Trichoderma reesei).